The primary structure comprises 391 residues: Glycerol-3-phosphate dehydrogenase [NAD(+)] (391 aa).

Residues 46–51 (GSGNWG), Phe78, and Phe134 contribute to the NAD(+) site. Residue Lys157 coordinates substrate. An NAD(+)-binding site is contributed by Ala190. Lys250 acts as the Proton acceptor in catalysis. 2 residues coordinate NAD(+): Arg315 and Gln344. 315-316 (RN) serves as a coordination point for substrate.

This sequence belongs to the NAD-dependent glycerol-3-phosphate dehydrogenase family.

The catalysed reaction is sn-glycerol 3-phosphate + NAD(+) = dihydroxyacetone phosphate + NADH + H(+). This chain is Glycerol-3-phosphate dehydrogenase [NAD(+)] (GPD), found in Candida tropicalis (Yeast).